The sequence spans 254 residues: Alcohol dehydrogenase (254 aa).

Residue 10 to 33 (FVAGLGGIGLETSREIVKSGPKNL) participates in NAD(+) binding. Serine 138 contributes to the substrate binding site. The active-site Proton acceptor is the tyrosine 151.

It belongs to the short-chain dehydrogenases/reductases (SDR) family. Homodimer.

It catalyses the reaction a primary alcohol + NAD(+) = an aldehyde + NADH + H(+). It carries out the reaction a secondary alcohol + NAD(+) = a ketone + NADH + H(+). In Scaptomyza crassifemur (Fruit fly), this protein is Alcohol dehydrogenase (Adh).